Reading from the N-terminus, the 326-residue chain is Putative ribose-phosphate pyrophosphokinase 2 (326 aa).

Residues 43 to 45 and 102 to 103 each bind ATP; these read DGE and RQ. Histidine 136 is a Mg(2+) binding site. D-ribose 5-phosphate is bound by residues aspartate 225 and 229–233; that span reads NTGKT.

Belongs to the ribose-phosphate pyrophosphokinase family. Class I subfamily. As to quaternary structure, homohexamer. The cofactor is Mg(2+).

It localises to the cytoplasm. It carries out the reaction D-ribose 5-phosphate + ATP = 5-phospho-alpha-D-ribose 1-diphosphate + AMP + H(+). Its pathway is metabolic intermediate biosynthesis; 5-phospho-alpha-D-ribose 1-diphosphate biosynthesis; 5-phospho-alpha-D-ribose 1-diphosphate from D-ribose 5-phosphate (route I): step 1/1. Functionally, involved in the biosynthesis of the central metabolite phospho-alpha-D-ribosyl-1-pyrophosphate (PRPP) via the transfer of pyrophosphoryl group from ATP to 1-hydroxyl of ribose-5-phosphate (Rib-5-P). This Streptococcus pyogenes serotype M18 (strain MGAS8232) protein is Putative ribose-phosphate pyrophosphokinase 2.